The chain runs to 536 residues: Inactive phospholipase D5 (536 aa).

Residues Met1–Cys68 lie on the Cytoplasmic side of the membrane. The chain crosses the membrane as a helical span at residues Ile69 to Val89. Over Asp90–Val536 the chain is Extracellular. Asn121 is a glycosylation site (N-linked (GlcNAc...) asparagine). The PLD phosphodiesterase 1 domain maps to Asn215 to Ser242. N-linked (GlcNAc...) asparagine glycosylation occurs at Asn302. The PLD phosphodiesterase 2 domain occupies Phe434 to Asp460. The segment at Gln503 to Val536 is disordered. A compositionally biased stretch (low complexity) spans Ser511–Lys521.

It belongs to the phospholipase D family.

It localises to the membrane. The polypeptide is Inactive phospholipase D5 (Pld5) (Mus musculus (Mouse)).